Here is a 579-residue protein sequence, read N- to C-terminus: uncharacterized protein (579 aa).

Transmembrane regions (helical) follow at residues 13–35 (DLIK…IPWI), 39–61 (SISR…LLLN), 66–83 (ANGL…AFYF), 93–110 (AYWG…TYPL), 130–152 (LAIV…IEYL), 162–181 (IVPK…FFLI), 201–223 (LIVN…LYLA), 238–257 (YIIM…RLLL), 264–286 (GFYR…GIHT), 296–315 (IRVM…LFSM), and 324–346 (LFSL…YYLA).

Its subcellular location is the cell membrane. This is an uncharacterized protein from Pasteurella multocida (strain Pm70).